Reading from the N-terminus, the 163-residue chain is MKFFAVLTLCIIGAIAHPLTSDEANLVKSSWNQVKHNEVDILAAVFKAYPDIQAKFPQFAGKDLDSIKTSGQFATHATRIVSFLSELIALSGNEANLSAVYGLVKKLGVDHKNRGITQGQFNEFKTALISYLSSHVSWGDNVAAAWEHALENTYTVAFEVIPA.

Residues 1 to 16 (MKFFAVLTLCIIGAIA) form the signal peptide. Positions 18 to 163 (PLTSDEANLV…YTVAFEVIPA (146 aa)) constitute a Globin domain. Heme b is bound by residues His76 and His111.

The protein belongs to the globin family.

The protein is Globin CTT-V (CTT-V) of Chironomus thummi piger (Midge).